Consider the following 710-residue polypeptide: Polyribonucleotide nucleotidyltransferase (710 aa).

2 residues coordinate Mg(2+): D488 and D494. In terms of domain architecture, KH spans P555–I614. Residues G624–K692 form the S1 motif domain.

Belongs to the polyribonucleotide nucleotidyltransferase family. Mg(2+) is required as a cofactor.

The protein resides in the cytoplasm. It catalyses the reaction RNA(n+1) + phosphate = RNA(n) + a ribonucleoside 5'-diphosphate. In terms of biological role, involved in mRNA degradation. Catalyzes the phosphorolysis of single-stranded polyribonucleotides processively in the 3'- to 5'-direction. The sequence is that of Polyribonucleotide nucleotidyltransferase from Maricaulis maris (strain MCS10) (Caulobacter maris).